Here is a 403-residue protein sequence, read N- to C-terminus: MEFDRILIRYGELSTKGKNRKQFVTRLAHNVKRAMKDLPEVRIHGERDRMYIILNGEDHKLAEERLKPIFGIQSFSPAVRVNLELDEVKNAALALVQDVHEQNGTFKVAARRSHREFPLDSNEINQEIGAYVLQNIEDLSVNVKNPDVKLTIDVRKEGVFLSCRTIIGAAGLPVGSSGRAMLMLSGGIDSPVAGYLAQKRGVEIEAVHFHSPPYTSEQAKQKAVDLAAKLAKYGGEVKMHIVPFTEIQEMIKQQIPESVIMTVTRRMMLKITDELRRKRNGLAIVNGESLGQVASQTLESMLAINAVTTTPIIRPVVSMDKNEIIQIAQKIDTYNLSVQPFEDCCTIFTPPSPKTKPKLDKIERYESFTDFDSLITKALDNIETITVNITENTQVKDEFADLF.

The region spanning 60–165 (KLAEERLKPI…KEGVFLSCRT (106 aa)) is the THUMP domain. ATP is bound by residues 183–184 (ML), 208–209 (HF), Arg265, Gly287, and Gln296.

This sequence belongs to the ThiI family.

Its subcellular location is the cytoplasm. The enzyme catalyses [ThiI sulfur-carrier protein]-S-sulfanyl-L-cysteine + a uridine in tRNA + 2 reduced [2Fe-2S]-[ferredoxin] + ATP + H(+) = [ThiI sulfur-carrier protein]-L-cysteine + a 4-thiouridine in tRNA + 2 oxidized [2Fe-2S]-[ferredoxin] + AMP + diphosphate. It carries out the reaction [ThiS sulfur-carrier protein]-C-terminal Gly-Gly-AMP + S-sulfanyl-L-cysteinyl-[cysteine desulfurase] + AH2 = [ThiS sulfur-carrier protein]-C-terminal-Gly-aminoethanethioate + L-cysteinyl-[cysteine desulfurase] + A + AMP + 2 H(+). The protein operates within cofactor biosynthesis; thiamine diphosphate biosynthesis. Its function is as follows. Catalyzes the ATP-dependent transfer of a sulfur to tRNA to produce 4-thiouridine in position 8 of tRNAs, which functions as a near-UV photosensor. Also catalyzes the transfer of sulfur to the sulfur carrier protein ThiS, forming ThiS-thiocarboxylate. This is a step in the synthesis of thiazole, in the thiamine biosynthesis pathway. The sulfur is donated as persulfide by IscS. The protein is Probable tRNA sulfurtransferase of Listeria welshimeri serovar 6b (strain ATCC 35897 / DSM 20650 / CCUG 15529 / CIP 8149 / NCTC 11857 / SLCC 5334 / V8).